A 275-amino-acid chain; its full sequence is F-box only protein 50 (275 aa).

The tract at residues 1–67 (MEEVREGHAL…LPEPAQPSEA (67 aa)) is disordered. The span at 26–62 (PPSPRSPSPPPSPPPLPSPPSLPSPAAPEAPELPEPA) shows a compositional bias: pro residues. Phosphoserine is present on residues serine 31, serine 37, and serine 49. Residues 95–273 (LLLRRPLYRN…VTDSSVSVQL (179 aa)) form the FBA domain.

Expressed in the esophagus, oral cavity, skin, tongue and reproductive organs.

It is found in the cytoplasm. In terms of biological role, promotes cell proliferation. This chain is F-box only protein 50 (NCCRP1), found in Homo sapiens (Human).